Here is a 1940-residue protein sequence, read N- to C-terminus: Myosin-2 (1940 aa).

Residues 33 to 82 (DAKTSVFVAEPKESFVKGTIQSREGGKVTVKTEGGATLTVKEDQVFPMNP) enclose the Myosin N-terminal SH3-like domain. Phosphothreonine occurs at positions 64 and 69. The Myosin motor domain occupies 86 to 783 (DKIEDMAMMT…LLGLLEEMRD (698 aa)). Lysine 130 carries the N6,N6,N6-trimethyllysine modification. 179–186 (GESGAGKT) is an ATP binding site. Position 389 is a phosphotyrosine (tyrosine 389). Serine 392 bears the Phosphoserine mark. At threonine 419 the chain carries Phosphothreonine. Residue serine 625 is modified to Phosphoserine. An actin-binding region spans residues 660–682 (LNKLMTNLRSTHPHFVRCIIPNE). A Pros-methylhistidine modification is found at histidine 758. Positions 762-776 (KFGHTKVFFKAGLLG) are actin-binding. The IQ domain maps to 786 to 815 (LAQLMTRTQARCRGFLARVEYQKMVERRES). Residues 844 to 1940 (LLKSAETEKE…EVHTKIISEE (1097 aa)) are a coiled coil. Phosphoserine occurs at positions 1093, 1097, 1163, and 1238. A Phosphothreonine modification is found at threonine 1242. Position 1244 is a phosphoserine (serine 1244). Residues threonine 1256 and threonine 1287 each carry the phosphothreonine modification. Phosphoserine is present on residues serine 1289, serine 1293, serine 1304, and serine 1307. Tyrosine 1465 is subject to Phosphotyrosine. At threonine 1468 the chain carries Phosphothreonine. Tyrosine 1493 carries the phosphotyrosine modification. Serine 1496 is modified (phosphoserine). Phosphothreonine is present on threonine 1502. Residue serine 1515 is modified to Phosphoserine. Threonine 1518 is modified (phosphothreonine). Residues serine 1543, serine 1555, serine 1575, serine 1601, serine 1715, and serine 1727 each carry the phosphoserine modification. A phosphothreonine mark is found at threonine 1731 and threonine 1737. The interval 1886–1905 (QAEEAEEQSNTNLSKFRKLQ) is disordered.

The protein belongs to the TRAFAC class myosin-kinesin ATPase superfamily. Myosin family. Muscle myosin is a hexameric protein that consists of 2 heavy chain subunits (MHC), 2 alkali light chain subunits (MLC) and 2 regulatory light chain subunits (MLC-2). Interacts with GCSAM.

It is found in the cytoplasm. Its subcellular location is the myofibril. Functionally, myosins are actin-based motor molecules with ATPase activity essential for muscle contraction. The polypeptide is Myosin-2 (MYH2) (Bos taurus (Bovine)).